A 152-amino-acid chain; its full sequence is uncharacterized protein (152 aa).

5 consecutive transmembrane segments (helical) span residues 2–22, 33–53, 58–78, 97–117, and 122–142; these read GVVF…LKLM, LKMI…WLIM, FLIE…LIYL, FMGN…IEYV, and IASP…FFNC.

It localises to the cell membrane. This is an uncharacterized protein from Methanocaldococcus jannaschii (strain ATCC 43067 / DSM 2661 / JAL-1 / JCM 10045 / NBRC 100440) (Methanococcus jannaschii).